The following is a 1315-amino-acid chain: Chaoptin (1315 aa).

An N-terminal signal peptide occupies residues 1-29; the sequence is MGLEFFFKFGYAFLTITLMIMIWMSLARA. An N-linked (GlcNAc...) (high mannose) asparagine; alternate glycan is attached at Asn77. Residue Asn77 is glycosylated (N-linked (GlcNAc...) (paucimannose) asparagine; alternate). LRR repeat units follow at residues 80–101, 103–124, 128–149, 152–173, 177–198, 201–222, 226–247, 250–271, and 279–300; these read KVFM…FLQS, GMYR…AFTG, SLWE…SLRH, KLRH…SFRG, SLQT…SFSG, ILET…VFVD, RLTR…ALGP, SLRT…ETYE, and NLDN…SFKY. Asn267 is a glycosylation site (N-linked (GlcNAc...) (paucimannose) asparagine; alternate). Asn267 is a glycosylation site (N-linked (GlcNAc...) (complex) asparagine; alternate). Residue Asn305 is glycosylated (N-linked (GlcNAc...) (high mannose) asparagine; alternate). Asn305 carries an N-linked (GlcNAc...) (paucimannose) asparagine; alternate glycan. LRR repeat units lie at residues 326-347, 351-372, 375-396, 401-424, 477-498, 527-548, 551-572, 577-598, 601-622, 625-646, 649-670, 676-696, 708-729, 733-754, 757-778, 781-802, 805-826, 828-849, 854-875, 879-900, 903-924, 928-948, 949-970, 973-994, 996-1017, 1021-1044, and 1045-1066; these read RIRE…AFDS, SLQI…LFNN, VLRV…ETFN, TLLK…RNMT, GLKR…AFHE, SLQE…SFHF, NLRL…TFQG, KLEE…TFFD, ALRK…AFMN, ELEY…SFQN, KLEI…YFDQ, NLNV…SSWS, NIKI…YFRP, SLTH…VFGN, HLQW…AFKN, QLQL…IFKP, GLRI…LFYN, GMEK…SLSS, TLCE…DLSN, SLRY…VFAT, KLAV…SFMG, SLIK…IRLK, YLRE…LAHN, NLRM…TQAL, HLRR…SFDG, DLEM…DSLP, and HLRS…PHLL. Asn361 carries an N-linked (GlcNAc...) (high mannose) asparagine glycan. Residue Asn422 is glycosylated (N-linked (GlcNAc...) asparagine). An N-linked (GlcNAc...) (high mannose) asparagine glycan is attached at Asn680. Residue Asn692 is glycosylated (N-linked (GlcNAc...) (high mannose) asparagine; alternate). Asn692 carries an N-linked (GlcNAc...) (paucimannose) asparagine; alternate glycan. A glycan (N-linked (GlcNAc...) (high mannose) asparagine) is linked at Asn718. Residue Asn746 is glycosylated (N-linked (GlcNAc...) asparagine). Asn936 carries N-linked (GlcNAc...) (high mannose) asparagine glycosylation. Asn970 carries N-linked (GlcNAc...) (paucimannose) asparagine glycosylation. Asn1012 carries N-linked (GlcNAc...) (complex) asparagine glycosylation. N-linked (GlcNAc...) (high mannose) asparagine glycosylation is found at Asn1122, Asn1152, and Asn1171. Residues 1211–1274 form the LRRCT domain; sequence TDLNCDCDLG…DDLRETRCEN (64 aa).

Belongs to the chaoptin family. Expressed in photoreceptor cells and their axons in the adult retina, the ocellus and larval photoreceptor organ.

The protein localises to the cell membrane. Required for photoreceptor cell morphogenesis. Mediates homophilic cellular adhesion. The polypeptide is Chaoptin (chp) (Drosophila melanogaster (Fruit fly)).